We begin with the raw amino-acid sequence, 112 residues long: UPF0122 protein CPR_1686 (112 aa).

Belongs to the UPF0122 family.

Might take part in the signal recognition particle (SRP) pathway. This is inferred from the conservation of its genetic proximity to ftsY/ffh. May be a regulatory protein. The protein is UPF0122 protein CPR_1686 of Clostridium perfringens (strain SM101 / Type A).